Consider the following 150-residue polypeptide: Arginine repressor (150 aa).

It belongs to the ArgR family.

Its subcellular location is the cytoplasm. It participates in amino-acid biosynthesis; L-arginine biosynthesis [regulation]. In terms of biological role, regulates arginine biosynthesis genes. This Ruminiclostridium cellulolyticum (strain ATCC 35319 / DSM 5812 / JCM 6584 / H10) (Clostridium cellulolyticum) protein is Arginine repressor.